Consider the following 708-residue polypeptide: O-antigen chain terminator bifunctional methyltransferase/kinase WbdD (708 aa).

The tract at residues 1–210 is methyltransferase; that stretch reads MTKDLNTLVS…VPRPMYLVSN (210 aa). Residues 16–17, Arg36, Gly61, 82–87, 108–111, and Leu128 contribute to the S-adenosyl-L-methionine site; these read YQ, DFQQEN, and GRIE. Residues 211-459 form a kinase region; it reads HRVLINDFNQ…AKLPSAEQQR (249 aa). ATP is bound by residues Pro229, His237, 241-243, Lys252, Glu274, 309-311, Met358, and Asp369; these read RRY and EKL. Residues 485 to 594 are a coiled coil; the sequence is AGSEALRGQI…EIEKIHRSRS (110 aa). Residues 601-669 are required for membrane-binding; the sequence is YRYLGLQIHL…RLYRRMNPLP (69 aa). The tract at residues 687 to 708 is required for localizing WbdA to the membrane; that stretch reads VMHPELLPPEVYEIYLKLTKNK.

Belongs to the WbdD family. Interacts with WbdA.

The protein resides in the cell inner membrane. It carries out the reaction 3-O-phospho-alpha-D-Man-(1-&gt;2)-alpha-D-Man-(1-&gt;2)-[alpha-D-Man-(1-&gt;3)-alpha-D-Man-(1-&gt;3)-alpha-D-Man-(1-&gt;2)-alpha-D-Man-(1-&gt;2)](n)-alpha-D-Man-(1-&gt;3)-alpha-D-Man-(1-&gt;3)-alpha-D-Man-(1-&gt;3)-alpha-D-GlcNAc-di-trans,octa-cis-undecaprenyl diphosphate + S-adenosyl-L-methionine = 3-O-methylphospho-alpha-D-Man-(1-&gt;2)-alpha-D-Man-(1-&gt;2)-[alpha-D-Man-(1-&gt;3)-alpha-D-Man-(1-&gt;3)-alpha-D-Man-(1-&gt;2)-alpha-D-Man-(1-&gt;2)](n)-alpha-D-Man-(1-&gt;3)-alpha-D-Man-(1-&gt;3)-alpha-D-Man-(1-&gt;3)-alpha-D-GlcNAc-di-trans,octa-cis-undecaprenyl diphosphate + S-adenosyl-L-homocysteine. The catalysed reaction is alpha-D-Man-(1-&gt;2)-alpha-D-Man-(1-&gt;2)-[alpha-D-Man-(1-&gt;3)-alpha-D-Man-(1-&gt;3)-alpha-D-Man-(1-&gt;2)-alpha-D-Man-(1-&gt;2)](n)-alpha-D-Man-(1-&gt;3)-alpha-D-Man-(1-&gt;3)-alpha-D-Man-(1-&gt;3)-alpha-D-GlcNAc-di-trans,octa-cis-undecaprenyl diphosphate + ATP = 3-O-phospho-alpha-D-Man-(1-&gt;2)-alpha-D-Man-(1-&gt;2)-[alpha-D-Man-(1-&gt;3)-alpha-D-Man-(1-&gt;3)-alpha-D-Man-(1-&gt;2)-alpha-D-Man-(1-&gt;2)](n)-alpha-D-Man-(1-&gt;3)-alpha-D-Man-(1-&gt;3)-alpha-D-Man-(1-&gt;3)-alpha-D-GlcNAc-di-trans,octa-cis-undecaprenyl diphosphate + ADP + H(+). It functions in the pathway bacterial outer membrane biogenesis; LPS O-antigen biosynthesis. Its function is as follows. Regulates the length of the LPS O-antigen polysaccharide chain. Stops the polymerization of the chain by phosphorylating and then methylating the phosphate on the terminal sugar. This terminal modification is essential for export of the O-antigen across the inner membrane. WbdD is also required for correct localization of the WbdA mannosyltransferase. The polypeptide is O-antigen chain terminator bifunctional methyltransferase/kinase WbdD (Escherichia coli).